The primary structure comprises 94 residues: Aspartyl/glutamyl-tRNA(Asn/Gln) amidotransferase subunit C (94 aa).

It belongs to the GatC family. In terms of assembly, heterotrimer of A, B and C subunits.

The enzyme catalyses L-glutamyl-tRNA(Gln) + L-glutamine + ATP + H2O = L-glutaminyl-tRNA(Gln) + L-glutamate + ADP + phosphate + H(+). It catalyses the reaction L-aspartyl-tRNA(Asn) + L-glutamine + ATP + H2O = L-asparaginyl-tRNA(Asn) + L-glutamate + ADP + phosphate + 2 H(+). In terms of biological role, allows the formation of correctly charged Asn-tRNA(Asn) or Gln-tRNA(Gln) through the transamidation of misacylated Asp-tRNA(Asn) or Glu-tRNA(Gln) in organisms which lack either or both of asparaginyl-tRNA or glutaminyl-tRNA synthetases. The reaction takes place in the presence of glutamine and ATP through an activated phospho-Asp-tRNA(Asn) or phospho-Glu-tRNA(Gln). This is Aspartyl/glutamyl-tRNA(Asn/Gln) amidotransferase subunit C from Caldicellulosiruptor saccharolyticus (strain ATCC 43494 / DSM 8903 / Tp8T 6331).